Reading from the N-terminus, the 109-residue chain is Large ribosomal subunit protein uL18c (109 aa).

Belongs to the universal ribosomal protein uL18 family. As to quaternary structure, part of the 50S ribosomal subunit; contacts the 5S rRNA.

The protein resides in the plastid. Its subcellular location is the chloroplast. Its function is as follows. Binds 5S rRNA, forms part of the central protuberance of the 50S subunit. The sequence is that of Large ribosomal subunit protein uL18c (rpl18) from Cyanidioschyzon merolae (strain NIES-3377 / 10D) (Unicellular red alga).